We begin with the raw amino-acid sequence, 308 residues long: D-alanine--D-alanine ligase (308 aa).

Positions 104–304 (KQALVPHGIP…YAELVERIVE (201 aa)) constitute an ATP-grasp domain. 131 to 187 (LPRPYVLKPVNEGSSVGVAIVRDDSNYGNPISRDALGPWQQFDRLLAEPFIKGRELT) contacts ATP. Residues D255, E271, and N273 each contribute to the Mg(2+) site.

Belongs to the D-alanine--D-alanine ligase family. It depends on Mg(2+) as a cofactor. The cofactor is Mn(2+).

It localises to the cytoplasm. The catalysed reaction is 2 D-alanine + ATP = D-alanyl-D-alanine + ADP + phosphate + H(+). It functions in the pathway cell wall biogenesis; peptidoglycan biosynthesis. In terms of biological role, cell wall formation. This chain is D-alanine--D-alanine ligase, found in Sphingopyxis alaskensis (strain DSM 13593 / LMG 18877 / RB2256) (Sphingomonas alaskensis).